A 386-amino-acid polypeptide reads, in one-letter code: Chaperone protein DnaJ (386 aa).

The 66-residue stretch at 3–68 (DYYEILEVAR…KKRQVYDRYG (66 aa)) folds into the J domain. A CR-type zinc finger spans residues 146–224 (GVDKELVISN…CKGQGAVKEK (79 aa)). Zn(2+) is bound by residues C159, C162, C176, C179, C198, C201, C212, and C215. CXXCXGXG motif repeat units follow at residues 159-166 (CNVCNGKG), 176-183 (CSECKGRG), 198-205 (CPKCHGEG), and 212-219 (CKNCKGQG).

Belongs to the DnaJ family. In terms of assembly, homodimer. The cofactor is Zn(2+).

Its subcellular location is the cytoplasm. Functionally, participates actively in the response to hyperosmotic and heat shock by preventing the aggregation of stress-denatured proteins and by disaggregating proteins, also in an autonomous, DnaK-independent fashion. Unfolded proteins bind initially to DnaJ; upon interaction with the DnaJ-bound protein, DnaK hydrolyzes its bound ATP, resulting in the formation of a stable complex. GrpE releases ADP from DnaK; ATP binding to DnaK triggers the release of the substrate protein, thus completing the reaction cycle. Several rounds of ATP-dependent interactions between DnaJ, DnaK and GrpE are required for fully efficient folding. Also involved, together with DnaK and GrpE, in the DNA replication of plasmids through activation of initiation proteins. The chain is Chaperone protein DnaJ from Protochlamydia amoebophila (strain UWE25).